A 119-amino-acid polypeptide reads, in one-letter code: Large ribosomal subunit protein uL18 (119 aa).

It belongs to the universal ribosomal protein uL18 family. Part of the 50S ribosomal subunit; part of the 5S rRNA/L5/L18/L25 subcomplex. Contacts the 5S and 23S rRNAs.

In terms of biological role, this is one of the proteins that bind and probably mediate the attachment of the 5S RNA into the large ribosomal subunit, where it forms part of the central protuberance. This chain is Large ribosomal subunit protein uL18, found in Staphylococcus aureus (strain bovine RF122 / ET3-1).